Reading from the N-terminus, the 145-residue chain is Deoxyuridine 5'-triphosphate nucleotidohydrolase (145 aa).

Substrate is bound by residues 65 to 67 (RSG), Asn78, 82 to 84 (TID), and Met92.

Belongs to the dUTPase family. The cofactor is Mg(2+).

The enzyme catalyses dUTP + H2O = dUMP + diphosphate + H(+). It functions in the pathway pyrimidine metabolism; dUMP biosynthesis; dUMP from dCTP (dUTP route): step 2/2. In terms of biological role, this enzyme is involved in nucleotide metabolism: it produces dUMP, the immediate precursor of thymidine nucleotides and it decreases the intracellular concentration of dUTP so that uracil cannot be incorporated into DNA. This Chlorobium phaeobacteroides (strain BS1) protein is Deoxyuridine 5'-triphosphate nucleotidohydrolase.